The primary structure comprises 268 residues: Aliphatic sulfonates import ATP-binding protein SsuB 2 (268 aa).

An ABC transporter domain is found at 16–230; that stretch reads VQLRNVVRQF…DSGQAGFQSI (215 aa). 48-55 lines the ATP pocket; that stretch reads GASGSGKT.

The protein belongs to the ABC transporter superfamily. Aliphatic sulfonates importer (TC 3.A.1.17.2) family. The complex is composed of two ATP-binding proteins (SsuB), two transmembrane proteins (SsuC) and a solute-binding protein (SsuA).

It localises to the cell inner membrane. The enzyme catalyses ATP + H2O + aliphatic sulfonate-[sulfonate-binding protein]Side 1 = ADP + phosphate + aliphatic sulfonateSide 2 + [sulfonate-binding protein]Side 1.. Part of the ABC transporter complex SsuABC involved in aliphatic sulfonates import. Responsible for energy coupling to the transport system. This Pseudomonas savastanoi pv. phaseolicola (strain 1448A / Race 6) (Pseudomonas syringae pv. phaseolicola (strain 1448A / Race 6)) protein is Aliphatic sulfonates import ATP-binding protein SsuB 2.